Here is a 203-residue protein sequence, read N- to C-terminus: Octanoyltransferase (203 aa).

The BPL/LPL catalytic domain occupies 30–203 (EDQDNYFFIT…HIIKEGRKLV (174 aa)). Residues 69 to 76 (RGGSVTFH), 135 to 137 (SVG), and 148 to 150 (GIS) contribute to the substrate site. Catalysis depends on C166, which acts as the Acyl-thioester intermediate.

It belongs to the LipB family.

The protein localises to the cytoplasm. It carries out the reaction octanoyl-[ACP] + L-lysyl-[protein] = N(6)-octanoyl-L-lysyl-[protein] + holo-[ACP] + H(+). Its pathway is protein modification; protein lipoylation via endogenous pathway; protein N(6)-(lipoyl)lysine from octanoyl-[acyl-carrier-protein]: step 1/2. Functionally, catalyzes the transfer of endogenously produced octanoic acid from octanoyl-acyl-carrier-protein onto the lipoyl domains of lipoate-dependent enzymes. Lipoyl-ACP can also act as a substrate although octanoyl-ACP is likely to be the physiological substrate. This chain is Octanoyltransferase, found in Persephonella marina (strain DSM 14350 / EX-H1).